The following is a 434-amino-acid chain: Glutamate-1-semialdehyde 2,1-aminomutase (434 aa).

Lys274 is modified (N6-(pyridoxal phosphate)lysine).

It belongs to the class-III pyridoxal-phosphate-dependent aminotransferase family. HemL subfamily. As to quaternary structure, homodimer. The cofactor is pyridoxal 5'-phosphate.

The protein resides in the cytoplasm. The enzyme catalyses (S)-4-amino-5-oxopentanoate = 5-aminolevulinate. It participates in porphyrin-containing compound metabolism; protoporphyrin-IX biosynthesis; 5-aminolevulinate from L-glutamyl-tRNA(Glu): step 2/2. In Acidovorax ebreus (strain TPSY) (Diaphorobacter sp. (strain TPSY)), this protein is Glutamate-1-semialdehyde 2,1-aminomutase.